Consider the following 432-residue polypeptide: Adenylosuccinate synthetase (432 aa).

GTP-binding positions include 13–19 (GDEGKGK) and 41–43 (GHT). Asp14 serves as the catalytic Proton acceptor. 2 residues coordinate Mg(2+): Asp14 and Gly41. IMP-binding positions include 14–17 (DEGK), 39–42 (NAGH), Thr130, Arg144, Gln225, Thr240, and Arg304. His42 acts as the Proton donor in catalysis. Substrate is bound at residue 300-306 (AVTGRPR). Residues Arg306, 332–334 (KLD), and 415–417 (STG) each bind GTP.

It belongs to the adenylosuccinate synthetase family. In terms of assembly, homodimer. Mg(2+) serves as cofactor.

The protein resides in the cytoplasm. It catalyses the reaction IMP + L-aspartate + GTP = N(6)-(1,2-dicarboxyethyl)-AMP + GDP + phosphate + 2 H(+). The protein operates within purine metabolism; AMP biosynthesis via de novo pathway; AMP from IMP: step 1/2. Its function is as follows. Plays an important role in the de novo pathway of purine nucleotide biosynthesis. Catalyzes the first committed step in the biosynthesis of AMP from IMP. The polypeptide is Adenylosuccinate synthetase (Haemophilus influenzae (strain ATCC 51907 / DSM 11121 / KW20 / Rd)).